A 557-amino-acid polypeptide reads, in one-letter code: Intraflagellar transport protein 56 (557 aa).

Positions 1 to 30 (MLLSRMKPAVGGEASTSSNEKKRKNKSKKI) are disordered. Residues 21–30 (KKRKNKSKKI) are compositionally biased toward basic residues. TPR repeat units follow at residues 60–93 (EHADLWTGFCAFHVGDHKRAMEEYKALTLRPDCP), 95–128 (DVWVYLGCALFFLGLYKEAEEAALKGSKTQLQNR), 154–187 (TEDQLSLASIHYMRSHYQEAIDIYKRILLQNREF), and 471–504 (ANDCYKMGQFYYAAKAFDALERLDPNPEYWEGKR).

The protein belongs to the IFT56 family. In terms of assembly, component of the IFT complex B.

It localises to the cell projection. The protein resides in the cilium. In terms of biological role, component of the intraflagellar transport (IFT) complex B required for transport of proteins in the motile cilium. Required for transport of specific ciliary cargo proteins related to motility, while it is neither required for IFT complex B assembly or motion nor for cilium assembly. Plays a key role in maintaining the integrity of the IFT complex B and the proper ciliary localization of the IFT complex B components. Essential for maintaining proper microtubule organization within the ciliary axoneme. The protein is Intraflagellar transport protein 56 of Danio rerio (Zebrafish).